We begin with the raw amino-acid sequence, 432 residues long: Adenylosuccinate synthetase (432 aa).

Residues 13-19 and 41-43 each bind GTP; these read GDEGKGK and GHT. The active-site Proton acceptor is D14. Mg(2+)-binding residues include D14 and G41. IMP-binding positions include 14 to 17, 39 to 42, T131, R145, Q226, T241, and R305; these read DEGK and NAGH. The Proton donor role is filled by H42. 301–307 serves as a coordination point for substrate; it reads SVTGRAR. GTP-binding positions include R307, 333-335, and 416-418; these read KLD and STG.

This sequence belongs to the adenylosuccinate synthetase family. In terms of assembly, homodimer. Mg(2+) serves as cofactor.

Its subcellular location is the cytoplasm. It catalyses the reaction IMP + L-aspartate + GTP = N(6)-(1,2-dicarboxyethyl)-AMP + GDP + phosphate + 2 H(+). It functions in the pathway purine metabolism; AMP biosynthesis via de novo pathway; AMP from IMP: step 1/2. Plays an important role in the de novo pathway of purine nucleotide biosynthesis. Catalyzes the first committed step in the biosynthesis of AMP from IMP. The polypeptide is Adenylosuccinate synthetase (Neisseria meningitidis serogroup A / serotype 4A (strain DSM 15465 / Z2491)).